Reading from the N-terminus, the 259-residue chain is Deoxyribose-phosphate aldolase (259 aa).

D102 acts as the Proton donor/acceptor in catalysis. K167 (schiff-base intermediate with acetaldehyde) is an active-site residue. The active-site Proton donor/acceptor is the K201.

It belongs to the DeoC/FbaB aldolase family. DeoC type 2 subfamily.

Its subcellular location is the cytoplasm. It catalyses the reaction 2-deoxy-D-ribose 5-phosphate = D-glyceraldehyde 3-phosphate + acetaldehyde. Its pathway is carbohydrate degradation; 2-deoxy-D-ribose 1-phosphate degradation; D-glyceraldehyde 3-phosphate and acetaldehyde from 2-deoxy-alpha-D-ribose 1-phosphate: step 2/2. In terms of biological role, catalyzes a reversible aldol reaction between acetaldehyde and D-glyceraldehyde 3-phosphate to generate 2-deoxy-D-ribose 5-phosphate. This Escherichia coli (strain SMS-3-5 / SECEC) protein is Deoxyribose-phosphate aldolase.